A 107-amino-acid chain; its full sequence is Endonuclease ALBA3 (107 aa).

Residues lysine 23 and lysine 32 each carry the N6-acetyllysine modification.

This sequence belongs to the histone-like Alba family. Homodimer. Interacts (acetylated and unacetylated) with Sir2A. A divalent metal cation is required as a cofactor. Acetylated. Exists in both acetylated and unacetylated forms but predominantly in an acetylated form. Deacetylated by Sir2A.

Its subcellular location is the nucleus. The protein localises to the chromosome. It localises to the telomere. It is found in the cytoplasm. With respect to regulation, mild acetylation lowers protein interaction with DNA and high acetylation abolishes DNA-binding activity. DNA binding and endonuclease activity is modulated via deacetylation of Lys-23 by Sir2A. Inhibited in the presence of EDTA and EGTA. Its function is as follows. Possesses DNA-binding and endonuclease activities. Binds DNA cooperatively in sequence-independent manner at the DNA minor groove. Exhibits apurinic/apyrimidinic site-driven endonuclease activity. Binds RNA; shows high affinity for poly(A) and a lower affinity for poly(U) templates. In vitro, prevents transcription after DNA binding. Associates with the telomeric region, the subtelomeric TARE6 repeat sequence and the var gene promoters. In Plasmodium falciparum (isolate 3D7), this protein is Endonuclease ALBA3.